A 46-amino-acid chain; its full sequence is PhoP/PhoQ regulator MgrB (46 aa).

A helical membrane pass occupies residues 6–26 (WVALVVVVLACLLLWAQVFNM).

The protein belongs to the MgrB family. As to quaternary structure, may form homooligomers. Probably interacts with the periplasmic domain of PhoQ.

The protein resides in the cell inner membrane. In terms of biological role, phoP-regulated transcription is redox-sensitive, being activated when the periplasm becomes more reducing. MgrB acts between DsbA/DsbB and PhoP/PhoQ in this pathway. Represses PhoP/PhoQ signaling, possibly by binding to the periplasmic domain of PhoQ, altering its activity and that of downstream effector PhoP. The polypeptide is PhoP/PhoQ regulator MgrB (Escherichia coli O6:K15:H31 (strain 536 / UPEC)).